The sequence spans 452 residues: Cholesterol 7-desaturase nvd 2 (452 aa).

2 helical membrane passes run 6 to 26 (LIRITVMVITSERLLILMGLC) and 32 to 52 (FPVMIRVVFNAAVAIVIALVM). The region spanning 107–212 (WFKVADSTWI…CCEVDGMAYL (106 aa)) is the Rieske domain. Residues C148, H150, C169, and H172 each coordinate [2Fe-2S] cluster.

Belongs to the cholesterol 7-desaturase family. [2Fe-2S] cluster serves as cofactor.

Its subcellular location is the membrane. It carries out the reaction cholesterol + NADPH + O2 + H(+) = 7-dehydrocholesterol + NADP(+) + 2 H2O. The enzyme catalyses cholesterol + NADH + O2 + H(+) = 7-dehydrocholesterol + NAD(+) + 2 H2O. The protein operates within steroid hormone biosynthesis; dafachronic acid biosynthesis. Functionally, catalyzes the production of 7-dehydrocholesterol (7-DHC or cholesta-5,7-dien-3beta-ol) by inserting a double bond (desaturating) at the C7-C8 single bond of cholesterol. Essential regulator of steroid biosynthesis as this reaction is the first step in the synthesis of the steroid hormone Delta(7)-dafachronic acid. The polypeptide is Cholesterol 7-desaturase nvd 2 (Ciona intestinalis (Transparent sea squirt)).